The primary structure comprises 1541 residues: Multiple epidermal growth factor-like domains protein 6 (1541 aa).

The first 30 residues, 1–30 (MSFLEEARAAGRAVVLALVLLLLPAVPVGA), serve as a signal peptide directing secretion. The EMI domain maps to 44–125 (MPHVCAEQEL…QQPDEEGCLS (82 aa)). Intrachain disulfides connect Cys48/Cys111, Cys77/Cys83, Cys110/Cys123, Cys128/Cys139, Cys133/Cys147, Cys149/Cys158, Cys165/Cys176, Cys172/Cys185, Cys187/Cys200, Cys242/Cys255, Cys248/Cys268, Cys270/Cys283, Cys289/Cys300, Cys296/Cys309, and Cys311/Cys324. An EGF-like 1 domain is found at 124–159 (LSAECSASLCFHGGRCVPGSAQPCHCPPGFQGPRCQ). Residues 161-201 (DVDECRTHNGGCQHRCVNTPGSYLCECKPGFRLHTDSRTCL) enclose the EGF-like 2; calcium-binding domain. 2 consecutive EGF-like domains span residues 206–242 (CALG…GRHC) and 238–284 (DGRH…KACE). N-linked (GlcNAc...) asparagine glycosylation occurs at Asn252. The 41-residue stretch at 285–325 (DVDECAAGLAQCAHGCLNTQGSFKCVCHAGYELGADGRQCY) folds into the EGF-like 5; calcium-binding domain. EGF-like domains are found at residues 335-370 (CEAN…QRTC) and 375-411 (DCAD…CGCE). Residues 412–452 (DVDECASSRGGCEHHCTNLAGSFQCSCEAGYRLHEDRRGCS) enclose the EGF-like 8; calcium-binding domain. 12 cysteine pairs are disulfide-bonded: Cys416-Cys427, Cys423-Cys436, Cys438-Cys451, Cys520-Cys533, Cys527-Cys540, Cys542-Cys551, Cys564-Cys576, Cys570-Cys583, Cys585-Cys594, Cys607-Cys619, Cys613-Cys626, and Cys628-Cys637. EGF-like domains follow at residues 516–552 (FGHD…LICN), 560–595 (FGKN…TNCE), 603–638 (YGKH…RFCH), 736–770 (FGVN…EDCE), 783–814 (QEIC…SRCQ), 822–857 (YGPS…FSCQ), 865–901 (WGPD…PRCE), 909–944 (FGPG…TFCE), 955–987 (DCRS…PRCA), 995–1030 (YGHN…PSCL), 1038–1073 (YGDN…LACE), 1081–1116 (VRAG…DKCQ), 1124–1159 (FGEA…SGCE), 1211–1246 (YGPG…TDCN), 1254–1289 (FGPN…VRCE), 1297–1332 (FGVG…RHCE), 1345–1375 (HLEC…QACE), 1383–1418 (HGAG…HFCE), and 1469–1504 (FGPS…PTCR). The N-linked (GlcNAc...) asparagine glycan is linked to Asn739. 15 disulfide bridges follow: Cys740-Cys751, Cys744-Cys758, Cys760-Cys769, Cys786-Cys795, Cys789-Cys802, Cys804-Cys813, Cys826-Cys838, Cys832-Cys845, Cys847-Cys856, Cys869-Cys882, Cys873-Cys889, Cys891-Cys900, Cys913-Cys925, Cys919-Cys932, and Cys934-Cys943. 30 disulfides stabilise this stretch: Cys999-Cys1011, Cys1005-Cys1018, Cys1020-Cys1029, Cys1042-Cys1054, Cys1048-Cys1061, Cys1063-Cys1072, Cys1085-Cys1097, Cys1091-Cys1104, Cys1106-Cys1115, Cys1128-Cys1140, Cys1134-Cys1147, Cys1149-Cys1158, Cys1215-Cys1227, Cys1221-Cys1234, Cys1236-Cys1245, Cys1258-Cys1270, Cys1264-Cys1277, Cys1279-Cys1288, Cys1301-Cys1313, Cys1307-Cys1320, Cys1322-Cys1331, Cys1348-Cys1356, Cys1350-Cys1363, Cys1365-Cys1374, Cys1387-Cys1399, Cys1393-Cys1406, Cys1408-Cys1417, Cys1473-Cys1485, Cys1479-Cys1492, and Cys1494-Cys1503. The interval 1509–1541 (LRLPENPSLAQGSAGTLPASSRPTSRSGGPARH) is disordered. Positions 1516-1535 (SLAQGSAGTLPASSRPTSRS) are enriched in polar residues.

It localises to the secreted. This Homo sapiens (Human) protein is Multiple epidermal growth factor-like domains protein 6 (MEGF6).